Reading from the N-terminus, the 490-residue chain is Betaine aldehyde dehydrogenase (490 aa).

Isoleucine 27 and aspartate 93 together coordinate K(+). Residue 150–152 (GAW) coordinates NAD(+). Lysine 162 serves as the catalytic Charge relay system. Residue 176 to 179 (KPSE) coordinates NAD(+). Valine 180 contacts K(+). An NAD(+)-binding site is contributed by 230–233 (GTDT). A K(+)-binding site is contributed by leucine 246. The Proton acceptor role is filled by glutamate 252. 3 residues coordinate NAD(+): glycine 254, cysteine 286, and glutamate 387. Cysteine 286 functions as the Nucleophile in the catalytic mechanism. Cysteine 286 is modified (cysteine sulfenic acid (-SOH)). Lysine 457 and glycine 460 together coordinate K(+). The active-site Charge relay system is glutamate 464.

Belongs to the aldehyde dehydrogenase family. As to quaternary structure, dimer of dimers. It depends on K(+) as a cofactor.

It carries out the reaction betaine aldehyde + NAD(+) + H2O = glycine betaine + NADH + 2 H(+). The protein operates within amine and polyamine biosynthesis; betaine biosynthesis via choline pathway; betaine from betaine aldehyde: step 1/1. In terms of biological role, involved in the biosynthesis of the osmoprotectant glycine betaine. Catalyzes the irreversible oxidation of betaine aldehyde to the corresponding acid. This is Betaine aldehyde dehydrogenase from Pseudomonas savastanoi pv. phaseolicola (strain 1448A / Race 6) (Pseudomonas syringae pv. phaseolicola (strain 1448A / Race 6)).